The sequence spans 1040 residues: Regulator of telomere elongation helicase 1 homolog (1040 aa).

A Helicase ATP-binding domain is found at 52–355; it reads RGINVEFPFE…KGLLLKLQEL (304 aa). ATP is bound at residue 87 to 94; sequence SPTGTGKT. Residues 117–137 are disordered; the sequence is RKNSAIPWSDSDEPLSQSGGG. 4 residues coordinate [4Fe-4S] cluster: C181, C202, C210, and C246. The DEAH box signature appears at 289-292; sequence DEAH. The tract at residues 926–949 is disordered; sequence KVPESQGSASSSVLTAKGNGGGDK. A compositionally biased stretch (polar residues) spans 930-939; that stretch reads SQGSASSSVL. Positions 992–999 match the PIP-box; degenerate motif; sequence QSIVQLFC.

This sequence belongs to the helicase family. RAD3/XPD subfamily.

It localises to the nucleus. The enzyme catalyses ATP + H2O = ADP + phosphate + H(+). Functionally, a probable ATP-dependent DNA helicase implicated in DNA replication, DNA repair and the maintenance of genomic stability. Acts as an anti-recombinase to counteract toxic recombination and limit crossover during meiosis. Regulates meiotic recombination and crossover homeostasis by physically dissociating strand invasion events and thereby promotes noncrossover repair by meiotic synthesis dependent strand annealing (SDSA) as well as disassembly of D loop recombination intermediates. Also plays a role in preserving the stability of 45S rDNA repeats. In Arabidopsis thaliana (Mouse-ear cress), this protein is Regulator of telomere elongation helicase 1 homolog.